Reading from the N-terminus, the 208-residue chain is Protein-L-isoaspartate O-methyltransferase (208 aa).

S59 is a catalytic residue.

This sequence belongs to the methyltransferase superfamily. L-isoaspartyl/D-aspartyl protein methyltransferase family.

It localises to the cytoplasm. It carries out the reaction [protein]-L-isoaspartate + S-adenosyl-L-methionine = [protein]-L-isoaspartate alpha-methyl ester + S-adenosyl-L-homocysteine. Its function is as follows. Catalyzes the methyl esterification of L-isoaspartyl residues in peptides and proteins that result from spontaneous decomposition of normal L-aspartyl and L-asparaginyl residues. It plays a role in the repair and/or degradation of damaged proteins. The protein is Protein-L-isoaspartate O-methyltransferase of Proteus mirabilis (strain HI4320).